We begin with the raw amino-acid sequence, 273 residues long: Glutamate racemase (273 aa).

Residues 9–10 and 41–42 each bind substrate; these read DS and YG. C73 acts as the Proton donor/acceptor in catalysis. 74–75 is a binding site for substrate; it reads NT. The active-site Proton donor/acceptor is C183. 184-185 provides a ligand contact to substrate; it reads TH.

This sequence belongs to the aspartate/glutamate racemases family.

The enzyme catalyses L-glutamate = D-glutamate. It functions in the pathway cell wall biogenesis; peptidoglycan biosynthesis. Provides the (R)-glutamate required for cell wall biosynthesis. This Shewanella sp. (strain ANA-3) protein is Glutamate racemase.